A 44-amino-acid chain; its full sequence is Phosphatase RapA inhibitor (44 aa).

The propeptide occupies 1–39 (MKSKWMSGLLLVAVGFSFTQVMVHAGETANTEGKTFHIA).

This sequence belongs to the Phr family. Interacts with RapA and inhibits its interaction with Spo0F. In terms of processing, secreted with a propeptide domain, which is cleaved in the cell wall by the secreted serine proteases subtilisin and Vpr to produce a mature signaling peptide. Contains a predicted signal peptide cleavage site in the N-terminal region, however the propeptide is probably subject to only one processing event, at the N-terminal end of the mature peptide.

The protein localises to the secreted. The protein resides in the cytoplasm. With respect to regulation, inhibition of RapA requires a free carboxylate group at the C-terminal end of the PhrA pentapeptide. A free C-terminal carboxylic acid PhrA pentapeptide inhibits RapA phosphatase activity at a 1:1 ratio and is approximately 200 fold more active than a C-terminal amide peptide. Signaling molecule involved in the regulation of sporulation. Secreted during production, but the mature peptide acts intracellularly, indicating that it needs to be imported into the cell to function. Inhibitor of the RapA phosphatase activity. Does not act on RapB. The sequence is that of Phosphatase RapA inhibitor from Bacillus subtilis (strain 168).